Here is a 268-residue protein sequence, read N- to C-terminus: Xyloglucan endotransglucosylase protein 7 (268 aa).

One can recognise a GH16 domain in the interval 1–196 (MNAEGGNLHR…WTKAPFTASY (196 aa)). E82 functions as the Nucleophile in the catalytic mechanism. The active-site Proton donor is the E86. E86 lines the xyloglucan pocket. An N-linked (GlcNAc...) asparagine glycan is attached at N90. Xyloglucan is bound by residues 99–101 (HTN), 109–111 (NRE), 175–176 (DW), and G180. Cystine bridges form between C204-C213 and C251-C265. R256 contacts xyloglucan.

This sequence belongs to the glycosyl hydrolase 16 family. XTH group 2 subfamily. In terms of processing, contains at least one intrachain disulfide bond essential for its enzymatic activity. In terms of tissue distribution, expressed at a very high level in flowers and stems (picked at anthesis), and at a lower level in ripe leaves and fruits.

It localises to the cytoplasm. It carries out the reaction breaks a beta-(1-&gt;4) bond in the backbone of a xyloglucan and transfers the xyloglucanyl segment on to O-4 of the non-reducing terminal glucose residue of an acceptor, which can be a xyloglucan or an oligosaccharide of xyloglucan.. Its function is as follows. Catalyzes xyloglucan endotransglycosylation (XET). Cleaves and religates xyloglucan polymers. Does not catalyze xyloglucan endohydrolysis (XEH). Probably involved in cell wall assembly and synthesis in fast growing tissues and in the maintenance of firmness in mature fruits. This chain is Xyloglucan endotransglucosylase protein 7, found in Diospyros kaki (Kaki persimmon).